Consider the following 229-residue polypeptide: 2-phytyl-1,4-naphtoquinone methyltransferase (229 aa).

Belongs to the class I-like SAM-binding methyltransferase superfamily. MenG/UbiE family.

It catalyses the reaction demethylphylloquinol + S-adenosyl-L-methionine = phylloquinol + S-adenosyl-L-homocysteine + H(+). It participates in cofactor biosynthesis; phylloquinone biosynthesis. Its function is as follows. Methyltransferase required for the conversion of 2-phytyl-1,4-beta-naphthoquinol to phylloquinol. This is 2-phytyl-1,4-naphtoquinone methyltransferase from Nostoc sp. (strain PCC 7120 / SAG 25.82 / UTEX 2576).